The primary structure comprises 213 residues: Urease accessory protein UreG (213 aa).

Position 12–19 (Gly-12–Thr-19) interacts with GTP.

It belongs to the SIMIBI class G3E GTPase family. UreG subfamily. Homodimer. UreD, UreF and UreG form a complex that acts as a GTP-hydrolysis-dependent molecular chaperone, activating the urease apoprotein by helping to assemble the nickel containing metallocenter of UreC. The UreE protein probably delivers the nickel.

It localises to the cytoplasm. Its function is as follows. Facilitates the functional incorporation of the urease nickel metallocenter. This process requires GTP hydrolysis, probably effectuated by UreG. This Marinomonas sp. (strain MWYL1) protein is Urease accessory protein UreG.